Consider the following 838-residue polypeptide: Sec1 family domain-containing protein MIP3 (838 aa).

Positions 637–677 (KSEETKEIPSDDQLDIDALDDDPWGKWGDEEEEEVDNSKAD) are disordered. Positions 646 to 658 (SDDQLDIDALDDD) are enriched in acidic residues.

The protein belongs to the STXBP/unc-18/SEC1 family. As to quaternary structure, forms a complex with MAG2, ZW10/MIP1 and MIP2 on the endoplasmic reticulum.

Its subcellular location is the endoplasmic reticulum membrane. In terms of biological role, required for proper maturation of seed storage proteins. Forms a complex with MAG2, ZW10/MIP1 and MIP2 on the endoplasmic reticulum that may be responsible for efficient transport of seed storage proteins. This Arabidopsis thaliana (Mouse-ear cress) protein is Sec1 family domain-containing protein MIP3.